A 383-amino-acid chain; its full sequence is Vesicle-associated membrane protein-associated protein scs2 (383 aa).

One can recognise an MSP domain in the interval 1-123; it reads MSVECSGELF…SIFDRKIRCV (123 aa). Residues 1–362 are Cytoplasmic-facing; that stretch reads MSVECSGELF…TGASLTESPG (362 aa). Residues 127 to 146 show a composition bias toward polar residues; it reads KQPPQSADKQVENTSTSNPP. 2 disordered regions span residues 127–160 and 233–359; these read KQPPQSADKQVENTSTSNPPVSVEGSENLASSVG and ESAS…SLTE. Serine 236, serine 237, serine 259, serine 261, and serine 268 each carry phosphoserine. The segment covering 241 to 263 has biased composition (basic and acidic residues); sequence DVARSKVQDIIDNEIPKPSESPR. The segment covering 289–300 has biased composition (basic and acidic residues); sequence FDTKKNDFDSKL. Polar residues predominate over residues 347–359; sequence ADPSSSTGASLTE. Residues 363-383 form a helical; Anchor for type IV membrane protein membrane-spanning segment; the sequence is IPPNIVIILCLIFFLIGYLFF.

It belongs to the VAMP-associated protein (VAP) (TC 9.B.17) family. As to quaternary structure, interacts (via MSP domain) with duc1 (via FFAT-motif); the interaction is direct and serves to restrict the localization of duc1 to areas of cell membrane-endoplasmic reticulum contact sites, and away from the cell division site. Interacts with epr1.

The protein resides in the endoplasmic reticulum membrane. Functionally, vesicle-associated membrane protein-associated protein (VAP) implicated in maintaining the cortical endoplasmic reticulum (ER)-plasma membrane (PM) attachment. ER-PM contacts function to modulate the distribution of contractile ring components to ensure robust ring assembly. ER-PM contacts function also in controlling exocytosis and maintenance of cell polarity regulating cell shape. VAPs play an important role in regulating eisosome assembly. VAPs also contribute to ER-phagy by tethering atg8 to the ER membrane, but also by maintaining the ER-plasma membrane contact. Restricts the localization of duc1 away from the site of cell division. This Schizosaccharomyces pombe (strain 972 / ATCC 24843) (Fission yeast) protein is Vesicle-associated membrane protein-associated protein scs2 (scs2).